The following is a 249-amino-acid chain: Proteasome activator complex subunit 1 (249 aa).

The disordered stretch occupies residues 55 to 102; the sequence is SNLKAPLDIPVPDPVKEKEKEERRKQQEKEDKDEKKKGEDEDKGPPCG. Residues 68–98 are compositionally biased toward basic and acidic residues; that stretch reads PVKEKEKEERRKQQEKEDKDEKKKGEDEDKG.

Belongs to the PA28 family. In terms of assembly, heterodimer of PSME1 and PSME2, which forms a hexameric ring. PSME1 can form homoheptamers.

Implicated in immunoproteasome assembly and required for efficient antigen processing. The PA28 activator complex enhances the generation of class I binding peptides by altering the cleavage pattern of the proteasome. This is Proteasome activator complex subunit 1 (PSME1) from Bos taurus (Bovine).